The chain runs to 437 residues: 3-ketoacyl-CoA thiolase (437 aa).

Residue C99 is the Acyl-thioester intermediate of the active site. Catalysis depends on proton acceptor residues H392 and C422.

This sequence belongs to the thiolase-like superfamily. Thiolase family. Heterotetramer of two alpha chains (FadJ) and two beta chains (FadI).

Its subcellular location is the cytoplasm. It carries out the reaction an acyl-CoA + acetyl-CoA = a 3-oxoacyl-CoA + CoA. Its pathway is lipid metabolism; fatty acid beta-oxidation. Catalyzes the final step of fatty acid oxidation in which acetyl-CoA is released and the CoA ester of a fatty acid two carbons shorter is formed. This chain is 3-ketoacyl-CoA thiolase, found in Erwinia tasmaniensis (strain DSM 17950 / CFBP 7177 / CIP 109463 / NCPPB 4357 / Et1/99).